A 999-amino-acid chain; its full sequence is Protein Smaug (999 aa).

The segment covering 1 to 36 (MKYATGTDNAMTSGISGQTNNSNSASNEMQPTTSTP) has biased composition (polar residues). Disordered regions lie at residues 1–69 (MKYA…QSQP) and 329–349 (LCPASGSRSSRTNDWQTIAPP). 2 stretches are compositionally biased toward low complexity: residues 44–69 (TSTATTTATYANGNPNSNANPSQSQP) and 329–338 (LCPASGSRSS). Serine 564 and serine 575 each carry phosphoserine. Residues 583-763 (EFKPNYIKFH…KDLKFKLSKM (181 aa)) form an interaction with cup region. Residues 600–654 (GIGLWLKSLRLHKYIELFKNMTYEEMLLITEDFLQSVGVTKGASHKLALCIDKLK) form the SAM domain. 2 disordered regions span residues 773 to 892 (HVKP…MQQM) and 955 to 977 (QQSQQQQQQRKLSGGVSSAEQQP). 2 stretches are compositionally biased toward polar residues: residues 801-822 (KNGSNDRINNRKNSNDMLNFSL) and 854-864 (HQPQYKSSSYP). At serine 972 the chain carries Phosphoserine.

It belongs to the SMAUG family. In terms of assembly, interacts with oskar (osk). Binds to the 3'-UTR of nanos (nos). Interacts with cup, which in turn recruits eIF4-E, leading to an indirect interaction between smg and eIF4-E that prevents mRNA translation. Forms a complex with aub, twin, AGO3, nanos mRNA and piRNAs that targets the nanos 3'-untranslated region, in early embryos. As to expression, at syncytial blastoderm, it is located throughout the bulk cytoplasm and pole plasm. By the time of cellularization, it concentrates at the posterior pole.

It is found in the cytoplasm. In terms of biological role, translation regulator that binds to the 3'-UTR of specific mRNAs such as nanos (nos) and prevents their translation. Prevents translation of unlocalized nanos in the bulk cytoplasm via the recruitment of cup. This chain is Protein Smaug (smg), found in Drosophila melanogaster (Fruit fly).